Here is a 1229-residue protein sequence, read N- to C-terminus: MRSRSNSGVRLDGYARLVHETILGFQNPVTGLLPASVQKKDAWVRDNVYSILAVWGLGMAYRKNADRDEDKAKAYELEQSVVKLMQGLLHCMMRQVAKVEKFKHTQSTTDCLHAKYDTSTCATVVGDDQWGHLQVDATSIYLLMLAQMTASGLRIISNLDEVAFVQNLVFYIEAAYKVADYGMWERGDKTNQGLPELNGSSVGMAKAALEAIDELDLFGAHGGPKSVIHVLPDEVEHCQSILCSMLPRASPSKEIDAGLLSVISFPAFAVEDADLVTITKSEIINKLQGRYGCCRFIRDGYHCPKEDPTRLHYDPAELKLFENIECEWPVFWTYLILDGIFAEDQVQVQEYREALEGVLIRGKNGIKLLPELYTVPFDKVEEEYRNPHSVDREATGQLPHMWEQSLYILGCLLAEGFLAPGEIDPLNRRFSTSFKPDVVVQVCVLAESQEIKALLSEQGMVVQTVAEVLPIRVMSARVLSQIYVRLGNCKKLSLSGRPYRHIGVLGTSKFYEIRNHTYTFTPQFLDQHHFYLALDNQMIVEMLRTELAYLSSCWRMTGRPTLTFPVTRSMLVEDGDAVDPCILSTLRKLQDGYFAGARVQMSDLSTFQTTSFHTRLSFLDEEHDDSLLEDDEEQEEEEEDKFEDDYNNYGPSGNNQVCYVSKDKFDQYLTQLLHSTTQKCHLPPIQRGQHHVFSAEHTTRDILSFMAQVQGLNVPKSSMYLPVTPLKSKHRRSLNLLDVPHPQHGPHLKQNKVGTFNSVLAADLHLPRDPQGKTDFATLVKQLKECPTLQDQADILYILNTSKGADWLVELSGPGQGGVSVHTLLEELYIQAGACKEWGLIRYISGILRKRVEVLAEACTDLISHHKQLTVGLPPEPRERVITVPLPPEELNTLIYEASGQDISVAVLTQEIMVYLAMYIRSQPALFGDMLRLRIGLIMQVMATELARSLHCSGEEASESLMSLSPFDMKNLLHHILSGKEFGVERSMRPIQSTATSPAISIHEIGHTGATKTERTGIRKLKSEIKQRCSSPSTPSGILSPVGPGPADGQLHWVERQGQWLRRRRLDGAINRVPVGFYQKVWKILQKCHGLSIDGYVLPSSTTREMTAGEIKFAVQVESVLNHVPQPEYRQLLVESVMVLGLVADVDVESIGSIIYVDRILHLANDLFLTDQKSYSAGDYFLEKDPETGICNFFYDSAPSGIYGTMTYLSKAAVTYIQDFLPSSSCIMQ.

A compositionally biased stretch (acidic residues) spans 625-646 (DSLLEDDEEQEEEEEDKFEDDY). The disordered stretch occupies residues 625–648 (DSLLEDDEEQEEEEEDKFEDDYNN). The tract at residues 825-855 (LEELYIQAGACKEWGLIRYISGILRKRVEVL) is calmodulin-binding. The interval 1024–1050 (EIKQRCSSPSTPSGILSPVGPGPADGQ) is disordered. The segment covering 1028–1037 (RCSSPSTPSG) has biased composition (polar residues). Residues 1052–1092 (HWVERQGQWLRRRRLDGAINRVPVGFYQKVWKILQKCHGLS) form a calmodulin-binding region. Cys-1226 carries S-farnesyl cysteine lipidation.

It belongs to the phosphorylase b kinase regulatory chain family. In terms of assembly, polymer of 16 chains, four each of alpha, beta, gamma, and delta. Alpha and beta are regulatory chains, gamma is the catalytic chain, and delta is calmodulin. In terms of processing, although the final Cys may be farnesylated, the terminal tripeptide is probably not removed, and the C-terminus is not methylated.

The protein localises to the cell membrane. Its pathway is glycan biosynthesis; glycogen metabolism. By phosphorylation of various serine residues and by calcium. Phosphorylase b kinase catalyzes the phosphorylation of serine in certain substrates, including troponin I. The alpha chain may bind calmodulin. In Takifugu rubripes (Japanese pufferfish), this protein is Phosphorylase b kinase regulatory subunit alpha, liver isoform (phka2).